Consider the following 226-residue polypeptide: Ribonuclease HII (226 aa).

One can recognise an RNase H type-2 domain in the interval 29–220 (GPVAGVDEAG…VVAAGVRLEQ (192 aa)). A divalent metal cation is bound by residues Asp-35, Glu-36, and Asp-129.

This sequence belongs to the RNase HII family. Mn(2+) is required as a cofactor. Requires Mg(2+) as cofactor.

It localises to the cytoplasm. It carries out the reaction Endonucleolytic cleavage to 5'-phosphomonoester.. In terms of biological role, endonuclease that specifically degrades the RNA of RNA-DNA hybrids. The polypeptide is Ribonuclease HII (Rhodococcus erythropolis (strain PR4 / NBRC 100887)).